Consider the following 348-residue polypeptide: sn-glycerol-3-phosphate import ATP-binding protein UgpC 3 (348 aa).

One can recognise an ABC transporter domain in the interval 4 to 234; it reads INIVDVKKNY…PASLFVAGFI (231 aa). 36–43 lines the ATP pocket; sequence GPSGCGKS.

This sequence belongs to the ABC transporter superfamily. sn-glycerol-3-phosphate importer (TC 3.A.1.1.3) family. As to quaternary structure, the complex is composed of two ATP-binding proteins (UgpC), two transmembrane proteins (UgpA and UgpE) and a solute-binding protein (UgpB).

It is found in the cell inner membrane. It carries out the reaction sn-glycerol 3-phosphate(out) + ATP + H2O = sn-glycerol 3-phosphate(in) + ADP + phosphate + H(+). Functionally, part of the ABC transporter complex UgpBAEC involved in sn-glycerol-3-phosphate (G3P) import. Responsible for energy coupling to the transport system. The polypeptide is sn-glycerol-3-phosphate import ATP-binding protein UgpC 3 (Rhizobium etli (strain ATCC 51251 / DSM 11541 / JCM 21823 / NBRC 15573 / CFN 42)).